Here is a 191-residue protein sequence, read N- to C-terminus: Protein GrpE (191 aa).

Basic and acidic residues predominate over residues 1 to 21 (MSDKKKNAEEFEETFSDKTSE). The segment at 1 to 39 (MSDKKKNAEEFEETFSDKTSEDESTVENETVEENENEDV) is disordered. Positions 22 to 38 (DESTVENETVEENENED) are enriched in acidic residues.

Belongs to the GrpE family. In terms of assembly, homodimer.

The protein resides in the cytoplasm. Functionally, participates actively in the response to hyperosmotic and heat shock by preventing the aggregation of stress-denatured proteins, in association with DnaK and GrpE. It is the nucleotide exchange factor for DnaK and may function as a thermosensor. Unfolded proteins bind initially to DnaJ; upon interaction with the DnaJ-bound protein, DnaK hydrolyzes its bound ATP, resulting in the formation of a stable complex. GrpE releases ADP from DnaK; ATP binding to DnaK triggers the release of the substrate protein, thus completing the reaction cycle. Several rounds of ATP-dependent interactions between DnaJ, DnaK and GrpE are required for fully efficient folding. In Tetragenococcus halophilus (Pediococcus halophilus), this protein is Protein GrpE.